The chain runs to 290 residues: Shikimate dehydrogenase (NADP(+)) (290 aa).

Shikimate-binding positions include 24 to 26 and Thr-71; that span reads SLS. The active-site Proton acceptor is the Lys-75. Shikimate contacts are provided by Asn-96 and Asp-111. NADP(+) contacts are provided by residues 136-140, 160-165, and Leu-233; these read GAGGA and NRTVDR. Residue Tyr-235 participates in shikimate binding. Position 256 (Gly-256) interacts with NADP(+).

It belongs to the shikimate dehydrogenase family. In terms of assembly, homodimer.

The enzyme catalyses shikimate + NADP(+) = 3-dehydroshikimate + NADPH + H(+). Its pathway is metabolic intermediate biosynthesis; chorismate biosynthesis; chorismate from D-erythrose 4-phosphate and phosphoenolpyruvate: step 4/7. Involved in the biosynthesis of the chorismate, which leads to the biosynthesis of aromatic amino acids. Catalyzes the reversible NADPH linked reduction of 3-dehydroshikimate (DHSA) to yield shikimate (SA). The sequence is that of Shikimate dehydrogenase (NADP(+)) from Methanopyrus kandleri (strain AV19 / DSM 6324 / JCM 9639 / NBRC 100938).